Consider the following 294-residue polypeptide: Cytidine deaminase (294 aa).

CMP/dCMP-type deaminase domains are found at residues 48 to 168 (DEDA…FGPK) and 186 to 294 (LTGD…VLLG). 89-91 (NME) lines the substrate pocket. Histidine 102 is a Zn(2+) binding site. The Proton donor role is filled by glutamate 104. Zn(2+) contacts are provided by cysteine 129 and cysteine 132.

Belongs to the cytidine and deoxycytidylate deaminase family. As to quaternary structure, homodimer. Zn(2+) serves as cofactor.

It catalyses the reaction cytidine + H2O + H(+) = uridine + NH4(+). The catalysed reaction is 2'-deoxycytidine + H2O + H(+) = 2'-deoxyuridine + NH4(+). In terms of biological role, this enzyme scavenges exogenous and endogenous cytidine and 2'-deoxycytidine for UMP synthesis. The chain is Cytidine deaminase from Salmonella enteritidis PT4 (strain P125109).